Reading from the N-terminus, the 586-residue chain is MFSLSSLSSSGGHSEQKERERISYFDIRINSPYKDIILIQGSPLELSSIPLSGNLVISVKNEIVVKKISLRLVGRFKLEFLQVGRYKKNSSSLASLVKEKRKIFECYWDNLLVSSKGDVLVGGENAENQHNSSSGRSTSNQDMDTSGNAIFLSKRSLSSPVFNKIIRRKTHSSHRKILELPENGVTGTPFEGLRENARSRSSSSNTLNNNSHSYSNRDGSGSSYLFLMKRGNYELPFNTMLPPEVCETIEGLQSGSILYSFEAIIDGRQLWDTDLSVHTSPHGPIGSTSTSGNGMRTKNKIIIKKFKYLRILRTLSMDNLAMQEEISVGNTWRDKLQYETSIPSRAVPIGSTTPVKIKIFPFEKNIRLDRIEMALIQYYAMKDSSAQIYDDEIAVMKITHLADFGPLTDKLDVDCPFTIPDNLKQITQDCCLQDNLIRVMHKLQVRILLQRQVDGEYKNLEIKAQLPMLLFISPHLPMKGRLVLFDKHDGKIHFRPGELVPLFLTTYPAQGLTPGVELNSTTTAHLALPQPPPNYHESTNDHLMPALQPLGADSVVLTVPSYEQAQAQASASSYVTGSVPAYCDDD.

Disordered stretches follow at residues 123–145 (GENA…DMDT) and 182–217 (ENGV…YSNR). Positions 126–145 (AENQHNSSSGRSTSNQDMDT) are enriched in polar residues. Residues 199 to 216 (SRSSSSNTLNNNSHSYSN) show a composition bias toward low complexity. A Glycyl lysine isopeptide (Lys-Gly) (interchain with G-Cter in ubiquitin) cross-link involves residue K364.

This sequence belongs to the arrestin family. In terms of assembly, interacts with RSP5. Post-translationally, ubiquitinated by RSP5.

Functionally, may regulate endocytosis by recruiting RSP5 ubiquitin ligase activity to specific plasma membrane proteins in response to extracellular stimuli. In Saccharomyces cerevisiae (strain ATCC 204508 / S288c) (Baker's yeast), this protein is Arrestin-related trafficking adapter 5 (ART5).